We begin with the raw amino-acid sequence, 446 residues long: Glutamine synthetase (446 aa).

The GS beta-grasp domain occupies 14-107; it reads NNVKFLRFQF…IICDVYRKNG (94 aa). A GS catalytic domain is found at 114–446; sequence PRGCLKRVLA…DWEFNKYVRI (333 aa). Residues glutamate 138 and glutamate 140 each contribute to the Mg(2+) site. Glutamate 187 lines the ATP pocket. Positions 192 and 199 each coordinate Mg(2+). L-glutamate contacts are provided by residues 243-244 and glycine 244; that span reads NG. Histidine 248 is a binding site for Mg(2+). Serine 252 provides a ligand contact to ATP. 3 residues coordinate L-glutamate: arginine 301, glutamate 307, and arginine 319. 3 residues coordinate ATP: arginine 319, arginine 324, and lysine 331. Glutamate 336 serves as a coordination point for Mg(2+). L-glutamate is bound at residue arginine 338.

This sequence belongs to the glutamine synthetase family. In terms of assembly, oligomer of 12 subunits arranged in the form of two hexagons. It depends on Mg(2+) as a cofactor.

The protein localises to the cytoplasm. The enzyme catalyses L-glutamate + NH4(+) + ATP = L-glutamine + ADP + phosphate + H(+). Functionally, probably involved in nitrogen metabolism via ammonium assimilation. Catalyzes the ATP-dependent biosynthesis of glutamine from glutamate and ammonia. The chain is Glutamine synthetase from Methanococcus voltae.